A 740-amino-acid polypeptide reads, in one-letter code: ATP-dependent RNA helicase DBP7 (740 aa).

Residues 1–104 (MSFNDDDDGM…SNVEQPARVT (104 aa)) are disordered. A compositionally biased stretch (polar residues) spans 13–25 (NFTTDVSDASETV). A compositionally biased stretch (basic and acidic residues) spans 43–60 (MMMEGRKPRVRGEKRPLE). Residues 72–81 (ASSSNSTSAQ) are compositionally biased toward polar residues. The short motif at 149 to 178 (DTFDSFGITDTMVSHLNVKMKISKPTKIQK) is the Q motif element. The region spanning 182 to 376 (PPFLQAQNDL…NVTLQNYKLI (195 aa)) is the Helicase ATP-binding domain. 195 to 202 (AQTGSGKT) provides a ligand contact to ATP. A DEAD box motif is present at residues 311 to 314 (DEGD). The 194-residue stretch at 414 to 607 (TITQKHYKEG…VLRPAFEGLN (194 aa)) folds into the Helicase C-terminal domain. The interval 695 to 721 (SMGLQQGKAGAAAAASQKKPKEDSKSK) is disordered. Low complexity predominate over residues 697 to 711 (GLQQGKAGAAAAASQ).

This sequence belongs to the DEAD box helicase family. DDX31/DBP7 subfamily.

The protein resides in the nucleus. Its subcellular location is the nucleolus. It catalyses the reaction ATP + H2O = ADP + phosphate + H(+). ATP-binding RNA helicase involved in the biogenesis of 60S ribosomal subunits and is required for the normal formation of 25S and 5.8S rRNAs. The protein is ATP-dependent RNA helicase DBP7 (DBP7) of Kluyveromyces lactis (strain ATCC 8585 / CBS 2359 / DSM 70799 / NBRC 1267 / NRRL Y-1140 / WM37) (Yeast).